Reading from the N-terminus, the 663-residue chain is Alcohol oxidase 1 (663 aa).

8–38 provides a ligand contact to FAD; it reads DILVLGGGSSGSCIAGRLANLDHSLKVGLIE. Catalysis depends on His-567, which acts as the Proton acceptor. The Microbody targeting signal motif lies at 661 to 663; the sequence is ARF.

The protein belongs to the GMC oxidoreductase family. Homooctamer. FAD is required as a cofactor.

Its subcellular location is the peroxisome matrix. It catalyses the reaction a primary alcohol + O2 = an aldehyde + H2O2. It participates in energy metabolism; methane degradation. In terms of biological role, major isoform of alcohol oxidase, which catalyzes the oxidation of methanol to formaldehyde and hydrogen peroxide, the first step in the methanol utilization pathway of methylotrophic yeasts. This Komagataella phaffii (strain ATCC 76273 / CBS 7435 / CECT 11047 / NRRL Y-11430 / Wegner 21-1) (Yeast) protein is Alcohol oxidase 1 (AOX1).